The primary structure comprises 410 residues: LL-diaminopimelate aminotransferase (410 aa).

2 residues coordinate substrate: Tyr15 and Gly42. Residues Tyr72, 108-109, Tyr132, Asn188, Tyr219, and 247-249 each bind pyridoxal 5'-phosphate; these read AK and SFS. Substrate contacts are provided by Lys109, Tyr132, and Asn188. At Lys250 the chain carries N6-(pyridoxal phosphate)lysine. 2 residues coordinate pyridoxal 5'-phosphate: Arg258 and Asn293. Residues Asn293 and Arg389 each contribute to the substrate site.

Belongs to the class-I pyridoxal-phosphate-dependent aminotransferase family. LL-diaminopimelate aminotransferase subfamily. Homodimer. Requires pyridoxal 5'-phosphate as cofactor.

It carries out the reaction (2S,6S)-2,6-diaminopimelate + 2-oxoglutarate = (S)-2,3,4,5-tetrahydrodipicolinate + L-glutamate + H2O + H(+). It functions in the pathway amino-acid biosynthesis; L-lysine biosynthesis via DAP pathway; LL-2,6-diaminopimelate from (S)-tetrahydrodipicolinate (aminotransferase route): step 1/1. Involved in the synthesis of meso-diaminopimelate (m-DAP or DL-DAP), required for both lysine and peptidoglycan biosynthesis. Catalyzes the direct conversion of tetrahydrodipicolinate to LL-diaminopimelate. This Bacteroides thetaiotaomicron (strain ATCC 29148 / DSM 2079 / JCM 5827 / CCUG 10774 / NCTC 10582 / VPI-5482 / E50) protein is LL-diaminopimelate aminotransferase.